A 449-amino-acid chain; its full sequence is Methylenetetrahydrofolate--tRNA-(uracil-5-)-methyltransferase TrmFO (449 aa).

FAD is bound at residue 9–14 (GGGIAG).

The protein belongs to the MnmG family. TrmFO subfamily. The cofactor is FAD.

It is found in the cytoplasm. It catalyses the reaction uridine(54) in tRNA + (6R)-5,10-methylene-5,6,7,8-tetrahydrofolate + NADH + H(+) = 5-methyluridine(54) in tRNA + (6S)-5,6,7,8-tetrahydrofolate + NAD(+). It carries out the reaction uridine(54) in tRNA + (6R)-5,10-methylene-5,6,7,8-tetrahydrofolate + NADPH + H(+) = 5-methyluridine(54) in tRNA + (6S)-5,6,7,8-tetrahydrofolate + NADP(+). Its function is as follows. Catalyzes the folate-dependent formation of 5-methyl-uridine at position 54 (M-5-U54) in all tRNAs. The polypeptide is Methylenetetrahydrofolate--tRNA-(uracil-5-)-methyltransferase TrmFO (Gloeobacter violaceus (strain ATCC 29082 / PCC 7421)).